A 244-amino-acid chain; its full sequence is Uridylate kinase (244 aa).

16 to 19 (KLSG) contacts ATP. Position 58 (glycine 58) interacts with UMP. ATP-binding residues include glycine 59 and arginine 63. Residues aspartate 78 and 139–146 (VGAPYFTT) contribute to the UMP site. ATP-binding residues include threonine 166, tyrosine 172, and aspartate 175.

Belongs to the UMP kinase family. Homohexamer.

It localises to the cytoplasm. It carries out the reaction UMP + ATP = UDP + ADP. It functions in the pathway pyrimidine metabolism; CTP biosynthesis via de novo pathway; UDP from UMP (UMPK route): step 1/1. Inhibited by UTP. Functionally, catalyzes the reversible phosphorylation of UMP to UDP. This is Uridylate kinase from Novosphingobium aromaticivorans (strain ATCC 700278 / DSM 12444 / CCUG 56034 / CIP 105152 / NBRC 16084 / F199).